The following is a 178-amino-acid chain: Large ribosomal subunit protein bL25 (178 aa).

The protein belongs to the bacterial ribosomal protein bL25 family. CTC subfamily. Part of the 50S ribosomal subunit; part of the 5S rRNA/L5/L18/L25 subcomplex. Contacts the 5S rRNA. Binds to the 5S rRNA independently of L5 and L18.

In terms of biological role, this is one of the proteins that binds to the 5S RNA in the ribosome where it forms part of the central protuberance. The polypeptide is Large ribosomal subunit protein bL25 (Wolinella succinogenes (strain ATCC 29543 / DSM 1740 / CCUG 13145 / JCM 31913 / LMG 7466 / NCTC 11488 / FDC 602W) (Vibrio succinogenes)).